A 466-amino-acid polypeptide reads, in one-letter code: Uronate isomerase (466 aa).

This sequence belongs to the metallo-dependent hydrolases superfamily. Uronate isomerase family.

It catalyses the reaction D-glucuronate = D-fructuronate. It carries out the reaction aldehydo-D-galacturonate = keto-D-tagaturonate. The protein operates within carbohydrate metabolism; pentose and glucuronate interconversion. This is Uronate isomerase (uxaC) from Brucella melitensis biotype 1 (strain ATCC 23456 / CCUG 17765 / NCTC 10094 / 16M).